The following is a 359-amino-acid chain: Alanine racemase, biosynthetic (359 aa).

Lys34 (proton acceptor; specific for D-alanine) is an active-site residue. Lys34 carries the N6-(pyridoxal phosphate)lysine modification. Arg129 serves as a coordination point for substrate. The active-site Proton acceptor; specific for L-alanine is Tyr255. Met303 is a substrate binding site.

The protein belongs to the alanine racemase family. As to quaternary structure, monomer but homodimer in the presence of the substrate. Pyridoxal 5'-phosphate is required as a cofactor.

The catalysed reaction is L-alanine = D-alanine. The protein operates within amino-acid biosynthesis; D-alanine biosynthesis; D-alanine from L-alanine: step 1/1. It functions in the pathway cell wall biogenesis; peptidoglycan biosynthesis. Functionally, catalyzes the interconversion of L-alanine and D-alanine. The chain is Alanine racemase, biosynthetic (alr) from Shigella sonnei.